The sequence spans 391 residues: Coiled-coil domain-containing protein 85C (391 aa).

Coiled-coil stretches lie at residues 19–86 and 116–146; these read EELL…RELC and KEVG…KEII. Disordered stretches follow at residues 155–238 and 278–303; these read GAGS…LNDS and PYHS…TRVT. Polar residues predominate over residues 157 to 175; sequence GSRSSIDSQNSLTNLNGSS. A compositionally biased stretch (low complexity) spans 182 to 194; the sequence is DGSSTSSTGSAGS. A compositionally biased stretch (polar residues) spans 280 to 303; it reads HSESQLSPLPQYQEPLQNGSTRVT.

It belongs to the CCDC85 family.

The protein localises to the cell junction. It is found in the tight junction. The protein resides in the adherens junction. Functionally, may play a role in cell-cell adhesion and epithelium development through its interaction with proteins of the beta-catenin family. May play an important role in cortical development, especially in the maintenance of radial glia. This chain is Coiled-coil domain-containing protein 85C (ccdc85c), found in Xenopus tropicalis (Western clawed frog).